We begin with the raw amino-acid sequence, 446 residues long: tRNA modification GTPase MnmE (446 aa).

(6S)-5-formyl-5,6,7,8-tetrahydrofolate is bound by residues Arg24, Glu81, and Lys120. In terms of domain architecture, TrmE-type G spans 216 to 368 (GLHAVLIGPP…LHTRLRELAL (153 aa)). Asn226 lines the K(+) pocket. GTP is bound by residues 226-231 (NAGKSS), 245-251 (TDVAGTT), and 270-273 (DTAG). Residue Ser230 coordinates Mg(2+). K(+)-binding residues include Thr245, Val247, and Thr250. Thr251 serves as a coordination point for Mg(2+). (6S)-5-formyl-5,6,7,8-tetrahydrofolate is bound at residue Lys446.

This sequence belongs to the TRAFAC class TrmE-Era-EngA-EngB-Septin-like GTPase superfamily. TrmE GTPase family. Homodimer. Heterotetramer of two MnmE and two MnmG subunits. K(+) is required as a cofactor.

The protein resides in the cytoplasm. Functionally, exhibits a very high intrinsic GTPase hydrolysis rate. Involved in the addition of a carboxymethylaminomethyl (cmnm) group at the wobble position (U34) of certain tRNAs, forming tRNA-cmnm(5)s(2)U34. This is tRNA modification GTPase MnmE from Xanthomonas campestris pv. campestris (strain B100).